Here is a 261-residue protein sequence, read N- to C-terminus: Cytochrome c oxidase subunit 3 (261 aa).

Residues 1-15 (MTHQTHAYHMVNPSP) are Mitochondrial matrix-facing. A helical membrane pass occupies residues 16–34 (WPLTGALSALLMTSGLAMW). Residues 35–40 (FHFNST) lie on the Mitochondrial intermembrane side of the membrane. A helical membrane pass occupies residues 41–66 (ILLMIGLTTNTLTMYQWWRDVIREST). Residues 67–72 (FQGHHT) are Mitochondrial matrix-facing. A helical membrane pass occupies residues 73–105 (PTVQKGLRYGMILFIISEVLFFTGFFWAFYHSS). The Mitochondrial intermembrane portion of the chain corresponds to 106–128 (LAPTPELGGCWPPTGIHPLNPLE). The chain crosses the membrane as a helical span at residues 129 to 152 (VPLLNTSVLLASGVSITWAHHSLM). The Mitochondrial matrix segment spans residues 153–155 (EGN). The helical transmembrane segment at 156 to 183 (RYPMLQALFITIALGVYFTLLQASEYYE) threads the bilayer. The Mitochondrial intermembrane segment spans residues 184–190 (APFTISD). A helical transmembrane segment spans residues 191 to 223 (GIYGSTFFVATGFHGLHVIIGSTFLIVCFFRQL). Residues 224 to 232 (KFHFTSNHH) lie on the Mitochondrial matrix side of the membrane. The chain crosses the membrane as a helical span at residues 233–256 (FGFEAAAWYWHFVDVVWLFLYVSI). Over 257–261 (YWWGS) the chain is Mitochondrial intermembrane.

It belongs to the cytochrome c oxidase subunit 3 family. As to quaternary structure, component of the cytochrome c oxidase (complex IV, CIV), a multisubunit enzyme composed of 14 subunits. The complex is composed of a catalytic core of 3 subunits MT-CO1, MT-CO2 and MT-CO3, encoded in the mitochondrial DNA, and 11 supernumerary subunits COX4I, COX5A, COX5B, COX6A, COX6B, COX6C, COX7A, COX7B, COX7C, COX8 and NDUFA4, which are encoded in the nuclear genome. The complex exists as a monomer or a dimer and forms supercomplexes (SCs) in the inner mitochondrial membrane with NADH-ubiquinone oxidoreductase (complex I, CI) and ubiquinol-cytochrome c oxidoreductase (cytochrome b-c1 complex, complex III, CIII), resulting in different assemblies (supercomplex SCI(1)III(2)IV(1) and megacomplex MCI(2)III(2)IV(2)).

It localises to the mitochondrion inner membrane. The enzyme catalyses 4 Fe(II)-[cytochrome c] + O2 + 8 H(+)(in) = 4 Fe(III)-[cytochrome c] + 2 H2O + 4 H(+)(out). Component of the cytochrome c oxidase, the last enzyme in the mitochondrial electron transport chain which drives oxidative phosphorylation. The respiratory chain contains 3 multisubunit complexes succinate dehydrogenase (complex II, CII), ubiquinol-cytochrome c oxidoreductase (cytochrome b-c1 complex, complex III, CIII) and cytochrome c oxidase (complex IV, CIV), that cooperate to transfer electrons derived from NADH and succinate to molecular oxygen, creating an electrochemical gradient over the inner membrane that drives transmembrane transport and the ATP synthase. Cytochrome c oxidase is the component of the respiratory chain that catalyzes the reduction of oxygen to water. Electrons originating from reduced cytochrome c in the intermembrane space (IMS) are transferred via the dinuclear copper A center (CU(A)) of subunit 2 and heme A of subunit 1 to the active site in subunit 1, a binuclear center (BNC) formed by heme A3 and copper B (CU(B)). The BNC reduces molecular oxygen to 2 water molecules using 4 electrons from cytochrome c in the IMS and 4 protons from the mitochondrial matrix. In Raphicerus melanotis (Cape grysbok), this protein is Cytochrome c oxidase subunit 3 (MT-CO3).